The primary structure comprises 189 residues: Acireductone dioxygenase 1 (189 aa).

H102, H104, E108, and H146 together coordinate Fe(2+). Residues H102, H104, E108, and H146 each contribute to the Ni(2+) site.

This sequence belongs to the acireductone dioxygenase (ARD) family. As to quaternary structure, monomer. Requires Fe(2+) as cofactor. It depends on Ni(2+) as a cofactor.

It carries out the reaction 1,2-dihydroxy-5-(methylsulfanyl)pent-1-en-3-one + O2 = 3-(methylsulfanyl)propanoate + CO + formate + 2 H(+). The enzyme catalyses 1,2-dihydroxy-5-(methylsulfanyl)pent-1-en-3-one + O2 = 4-methylsulfanyl-2-oxobutanoate + formate + 2 H(+). Its pathway is amino-acid biosynthesis; L-methionine biosynthesis via salvage pathway; L-methionine from S-methyl-5-thio-alpha-D-ribose 1-phosphate: step 5/6. Catalyzes 2 different reactions between oxygen and the acireductone 1,2-dihydroxy-3-keto-5-methylthiopentene (DHK-MTPene) depending upon the metal bound in the active site. Fe-containing acireductone dioxygenase (Fe-ARD) produces formate and 2-keto-4-methylthiobutyrate (KMTB), the alpha-ketoacid precursor of methionine in the methionine recycle pathway. Ni-containing acireductone dioxygenase (Ni-ARD) produces methylthiopropionate, carbon monoxide and formate, and does not lie on the methionine recycle pathway. This is Acireductone dioxygenase 1 from Nocardia farcinica (strain IFM 10152).